A 346-amino-acid polypeptide reads, in one-letter code: Quinolinate synthase (346 aa).

Iminosuccinate contacts are provided by histidine 47 and serine 68. Cysteine 113 contacts [4Fe-4S] cluster. Iminosuccinate contacts are provided by residues 139-141 and serine 156; that span reads YAN. Cysteine 200 is a binding site for [4Fe-4S] cluster. Iminosuccinate is bound by residues 226–228 and threonine 243; that span reads HPE. Cysteine 297 is a [4Fe-4S] cluster binding site.

It belongs to the quinolinate synthase family. Type 1 subfamily. The cofactor is [4Fe-4S] cluster.

It is found in the cytoplasm. The catalysed reaction is iminosuccinate + dihydroxyacetone phosphate = quinolinate + phosphate + 2 H2O + H(+). It functions in the pathway cofactor biosynthesis; NAD(+) biosynthesis; quinolinate from iminoaspartate: step 1/1. In terms of biological role, catalyzes the condensation of iminoaspartate with dihydroxyacetone phosphate to form quinolinate. The protein is Quinolinate synthase of Pseudoalteromonas translucida (strain TAC 125).